The following is a 322-amino-acid chain: Ferredoxin--NADP reductase (322 aa).

Positions 87, 119, 279, and 320 each coordinate FAD.

It belongs to the ferredoxin--NADP reductase type 2 family. Homodimer. Requires FAD as cofactor.

The catalysed reaction is 2 reduced [2Fe-2S]-[ferredoxin] + NADP(+) + H(+) = 2 oxidized [2Fe-2S]-[ferredoxin] + NADPH. The protein is Ferredoxin--NADP reductase of Streptococcus suis (strain 98HAH33).